Reading from the N-terminus, the 201-residue chain is 3-isopropylmalate dehydratase small subunit (201 aa).

Belongs to the LeuD family. LeuD type 1 subfamily. As to quaternary structure, heterodimer of LeuC and LeuD.

The catalysed reaction is (2R,3S)-3-isopropylmalate = (2S)-2-isopropylmalate. It functions in the pathway amino-acid biosynthesis; L-leucine biosynthesis; L-leucine from 3-methyl-2-oxobutanoate: step 2/4. Catalyzes the isomerization between 2-isopropylmalate and 3-isopropylmalate, via the formation of 2-isopropylmaleate. The polypeptide is 3-isopropylmalate dehydratase small subunit (Parvibaculum lavamentivorans (strain DS-1 / DSM 13023 / NCIMB 13966)).